A 261-amino-acid chain; its full sequence is uncharacterized protein (261 aa).

Positions S15–Y75 constitute an HTH tetR-type domain. Residues S38–F57 constitute a DNA-binding region (H-T-H motif). Residues A234 to R261 form a disordered region. Residues R241 to R261 are compositionally biased toward low complexity.

This is an uncharacterized protein from Mycobacterium bovis (strain ATCC BAA-935 / AF2122/97).